The chain runs to 519 residues: Cytosol aminopeptidase (519 aa).

Serine 42 bears the Phosphoserine mark. Position 45 is an N6-succinyllysine (lysine 45). Phosphoserine is present on serine 54. Lysine 61 and lysine 103 each carry N6-succinyllysine. Phosphoserine occurs at positions 180 and 194. Residues leucine 202, methionine 203, and threonine 205 each contribute to the Zn(2+) site. At lysine 221 the chain carries N6-acetyllysine; alternate. Position 221 is an N6-succinyllysine; alternate (lysine 221). Serine 238 bears the Phosphoserine mark. Positions 282 and 287 each coordinate Zn(2+). Substrate contacts are provided by lysine 282, aspartate 287, serine 292, and lysine 294. Aspartate 287 provides a ligand contact to Mg(2+). Residue lysine 294 is part of the active site. The Zn(2+) site is built by arginine 303, aspartate 305, aspartate 364, and glutamate 366. Substrate contacts are provided by aspartate 305 and aspartate 364. Positions 364 and 366 each coordinate Mg(2+). The active site involves arginine 368. The residue at position 455 (lysine 455) is an N6-acetyllysine; alternate. The residue at position 455 (lysine 455) is an N6-succinyllysine; alternate. The residue at position 476 (lysine 476) is an N6-succinyllysine. At lysine 489 the chain carries N6-acetyllysine; alternate. Lysine 489 is subject to N6-succinyllysine; alternate.

The protein belongs to the peptidase M17 family. As to quaternary structure, homohexamer. Zn(2+) is required as a cofactor. Mn(2+) serves as cofactor.

The protein localises to the cytoplasm. The catalysed reaction is Release of an N-terminal amino acid, Xaa-|-Yaa-, in which Xaa is preferably Leu, but may be other amino acids including Pro although not Arg or Lys, and Yaa may be Pro. Amino acid amides and methyl esters are also readily hydrolyzed, but rates on arylamides are exceedingly low.. The enzyme catalyses an S-substituted L-cysteinylglycine + H2O = an S-substituted L-cysteine + glycine. It carries out the reaction L-cysteinylglycine + H2O = L-cysteine + glycine. It catalyses the reaction S-benzyl-L-cysteinylglycine + H2O = S-benzyl-L-cysteine + glycine. The catalysed reaction is Release of N-terminal proline from a peptide.. Its function is as follows. Cytosolic metallopeptidase that catalyzes the removal of unsubstituted N-terminal hydrophobic amino acids from various peptides. The presence of Zn(2+) ions is essential for the peptidase activity, and the association with other cofactors can modulate the substrate spectificity of the enzyme. For instance, in the presence of Mn(2+), it displays a specific Cys-Gly hydrolyzing activity of Cys-Gly-S-conjugates. Involved in the metabolism of glutathione and in the degradation of glutathione S-conjugates, which may play a role in the control of the cell redox status. The sequence is that of Cytosol aminopeptidase from Homo sapiens (Human).